Reading from the N-terminus, the 274-residue chain is Photosystem II extrinsic protein O (274 aa).

Residues 1–28 (MRFRPSIVALLSVCFGLLTFLYSGSAFA) form the signal peptide.

This sequence belongs to the PsbO family. In terms of assembly, PSII is composed of 1 copy each of membrane proteins PsbA, PsbB, PsbC, PsbD, PsbE, PsbF, PsbH, PsbI, PsbJ, PsbK, PsbL, PsbM, PsbT, PsbX, PsbY, PsbZ, Psb30/Ycf12, peripheral proteins PsbO, CyanoQ (PsbQ), PsbU, PsbV and a large number of cofactors. It forms dimeric complexes. Contacts PsbQ.

It is found in the cellular thylakoid membrane. Its function is as follows. One of the extrinsic, lumenal subunits of photosystem II (PSII), which stabilize and protect the oxygen-evolving complex. PSII is a light-driven water plastoquinone oxidoreductase, using light energy to abstract electrons from H(2)O, generating a proton gradient subsequently used for ATP formation. Required for dimerization of PSII and for binding of PsbQ to PSII. This is Photosystem II extrinsic protein O from Synechocystis sp. (strain ATCC 27184 / PCC 6803 / Kazusa).